We begin with the raw amino-acid sequence, 461 residues long: Cysteine--tRNA ligase (461 aa).

Cysteine 29 lines the Zn(2+) pocket. The 'HIGH' region signature appears at 31-41 (MTVYDFCHIGH). Cysteine 210, histidine 235, and glutamate 239 together coordinate Zn(2+). The 'KMSKS' region motif lies at 267–271 (KMSKS). Position 270 (lysine 270) interacts with ATP.

The protein belongs to the class-I aminoacyl-tRNA synthetase family. Monomer. The cofactor is Zn(2+).

Its subcellular location is the cytoplasm. The catalysed reaction is tRNA(Cys) + L-cysteine + ATP = L-cysteinyl-tRNA(Cys) + AMP + diphosphate. This is Cysteine--tRNA ligase from Ectopseudomonas mendocina (strain ymp) (Pseudomonas mendocina).